Here is a 33-residue protein sequence, read N- to C-terminus: PRNPEIQNEIIDLHNYLRRSVNPXASNMLRSQW.

Belongs to the CRISP family. Contains 8 disulfide bonds. As to expression, expressed by the venom gland.

The protein localises to the secreted. Its function is as follows. Blocks contraction of smooth muscle elicited by high potassium-induced depolarization, but does not block caffeine-stimulated contraction. May target voltage-gated calcium channels on smooth muscle. This is Cysteine-rich venom protein tripurin from Trimeresurus purpureomaculatus (Mangrove pit viper).